We begin with the raw amino-acid sequence, 95 residues long: MSGRPQAVPTVQVDNAEVIVTEWRFAPGAETGRHRHGHDYVVVPLTDGTLLLETPEGDRHAPLVAGQAYFRKAGVEHNVINASAHEVVFVETEIK.

In terms of domain architecture, Cupin type-2 spans Trp-23 to Val-90.

In terms of biological role, involved in the degradation of beta-alanine. In Pseudomonas aeruginosa (strain ATCC 15692 / DSM 22644 / CIP 104116 / JCM 14847 / LMG 12228 / 1C / PRS 101 / PAO1), this protein is Beta-alanine degradation protein BauB (bauB).